The sequence spans 368 residues: Phosphate acyltransferase (368 aa).

Positions 337 to 368 are disordered; sequence LGEGEHNAGGAGHASPAAGHHAEPSAAQSSKA. Residues 349–368 are compositionally biased toward low complexity; sequence HASPAAGHHAEPSAAQSSKA.

It belongs to the PlsX family. As to quaternary structure, homodimer. Probably interacts with PlsY.

It is found in the cytoplasm. It carries out the reaction a fatty acyl-[ACP] + phosphate = an acyl phosphate + holo-[ACP]. Its pathway is lipid metabolism; phospholipid metabolism. Its function is as follows. Catalyzes the reversible formation of acyl-phosphate (acyl-PO(4)) from acyl-[acyl-carrier-protein] (acyl-ACP). This enzyme utilizes acyl-ACP as fatty acyl donor, but not acyl-CoA. The protein is Phosphate acyltransferase of Burkholderia lata (strain ATCC 17760 / DSM 23089 / LMG 22485 / NCIMB 9086 / R18194 / 383).